We begin with the raw amino-acid sequence, 179 residues long: Negative modulator of initiation of replication (179 aa).

An interaction with DNA region spans residues 86 to 87; the sequence is AV.

This sequence belongs to the SeqA family. In terms of assembly, homodimer. Polymerizes to form helical filaments.

It is found in the cytoplasm. Its function is as follows. Negative regulator of replication initiation, which contributes to regulation of DNA replication and ensures that replication initiation occurs exactly once per chromosome per cell cycle. Binds to pairs of hemimethylated GATC sequences in the oriC region, thus preventing assembly of replication proteins and re-initiation at newly replicated origins. Repression is relieved when the region becomes fully methylated. The protein is Negative modulator of initiation of replication of Shewanella woodyi (strain ATCC 51908 / MS32).